A 124-amino-acid chain; its full sequence is NADH dehydrogenase [ubiquinone] iron-sulfur protein 6, mitochondrial (124 aa).

The N-terminal 28 residues, 1-28 (MAAAMTFCRLLNRCGEAARSLPLGARCF), are a transit peptide targeting the mitochondrion. An N6-acetyllysine modification is found at Lys-98.

This sequence belongs to the complex I NDUFS6 subunit family. As to quaternary structure, mammalian complex I is composed of 45 different subunits. This is a component of the iron-sulfur (IP) fragment of the enzyme.

Its subcellular location is the mitochondrion inner membrane. Its function is as follows. Accessory subunit of the mitochondrial membrane respiratory chain NADH dehydrogenase (Complex I), that is believed not to be involved in catalysis. Complex I functions in the transfer of electrons from NADH to the respiratory chain. The immediate electron acceptor for the enzyme is believed to be ubiquinone. The sequence is that of NADH dehydrogenase [ubiquinone] iron-sulfur protein 6, mitochondrial (NDUFS6) from Homo sapiens (Human).